The following is a 320-amino-acid chain: 1-aminocyclopropane-1-carboxylate oxidase (320 aa).

Residues 154 to 254 (PTFGTKVSNY…RMSLASFYNP (101 aa)) enclose the Fe2OG dioxygenase domain. The Fe cation site is built by H178, D180, and H235.

Belongs to the iron/ascorbate-dependent oxidoreductase family. Fe cation serves as cofactor.

It catalyses the reaction 1-aminocyclopropane-1-carboxylate + L-ascorbate + O2 = ethene + L-dehydroascorbate + hydrogen cyanide + CO2 + 2 H2O. It participates in alkene biosynthesis; ethylene biosynthesis via S-adenosyl-L-methionine; ethylene from S-adenosyl-L-methionine: step 2/2. This chain is 1-aminocyclopropane-1-carboxylate oxidase (ACO), found in Persea americana (Avocado).